The chain runs to 94 residues: Co-chaperonin GroES (94 aa).

It belongs to the GroES chaperonin family. In terms of assembly, heptamer of 7 subunits arranged in a ring. Interacts with the chaperonin GroEL.

The protein resides in the cytoplasm. In terms of biological role, together with the chaperonin GroEL, plays an essential role in assisting protein folding. The GroEL-GroES system forms a nano-cage that allows encapsulation of the non-native substrate proteins and provides a physical environment optimized to promote and accelerate protein folding. GroES binds to the apical surface of the GroEL ring, thereby capping the opening of the GroEL channel. This chain is Co-chaperonin GroES, found in Shouchella clausii (strain KSM-K16) (Alkalihalobacillus clausii).